The sequence spans 309 residues: Malate dehydrogenase (309 aa).

NAD(+) is bound by residues Gly9–Gly14 and Asp33. Substrate is bound by residues Arg82 and Arg88. NAD(+)-binding positions include Asn95 and Val118 to Asn120. 2 residues coordinate substrate: Asn120 and Arg151. His175 serves as the catalytic Proton acceptor.

Belongs to the LDH/MDH superfamily. MDH type 3 family.

It catalyses the reaction (S)-malate + NAD(+) = oxaloacetate + NADH + H(+). Functionally, catalyzes the reversible oxidation of malate to oxaloacetate. This Roseiflexus castenholzii (strain DSM 13941 / HLO8) protein is Malate dehydrogenase.